A 147-amino-acid polypeptide reads, in one-letter code: METLITISRWLAKQHVVTWCVQQEGELWCANAFYLFDAQKVAFYILTEEKTRHAQMSGPQAAVAGTVNGQPKTVALIRGVQFKGEIRRLEGEESDLARKAYNHRFPVARMLSAPVWEIRLDEIKFTDNTLGFGKKMIWLRDSGTEQA.

Belongs to the UPF0306 family.

This is UPF0306 protein YhbP from Shigella boydii serotype 4 (strain Sb227).